The sequence spans 454 residues: UPF0210 protein Memar_2269 (454 aa).

This sequence belongs to the UPF0210 family.

The chain is UPF0210 protein Memar_2269 from Methanoculleus marisnigri (strain ATCC 35101 / DSM 1498 / JR1).